Reading from the N-terminus, the 362-residue chain is Protein RecA (362 aa).

Residue 67–74 (GPESSGKT) coordinates ATP. Low complexity predominate over residues 337–356 (VADAPADSAPAPVAAVAPKA). Positions 337 to 362 (VADAPADSAPAPVAAVAPKASARKSA) are disordered.

Belongs to the RecA family.

The protein localises to the cytoplasm. Functionally, can catalyze the hydrolysis of ATP in the presence of single-stranded DNA, the ATP-dependent uptake of single-stranded DNA by duplex DNA, and the ATP-dependent hybridization of homologous single-stranded DNAs. It interacts with LexA causing its activation and leading to its autocatalytic cleavage. This chain is Protein RecA, found in Clavibacter michiganensis subsp. michiganensis (strain NCPPB 382).